The following is a 38-amino-acid chain: Mu/omega-theraphotoxin-Mb1a (38 aa).

3 cysteine pairs are disulfide-bonded: Cys-7–Cys-21, Cys-14–Cys-26, and Cys-20–Cys-33. Threonine amide is present on Thr-38.

It belongs to the neurotoxin 10 (Hwtx-1) family. 28 (Jztx-11) subfamily. In terms of tissue distribution, expressed by the venom gland.

Its subcellular location is the secreted. Paralytic toxin that inhibits insect voltage-gated sodium (Nav) and calcium (Cav) channels in P.americana (American cockroach) dorsal unpaired median (DUM) neurons, and inhibits the B.germanica (German cockroach) Nav channel (BgNaV1). Also shows a delay in fast inactivation when tested on BgNaV1. May act as a gating-modifier toxin on Nav and as a pore blocker on Cav. In vivo, reversibly paralyzes both L.cuprina (Australian sheep blowfly) and M.domestica (housefly), but does not affect larvae of H.armigera (cotton bollworms). This Monocentropus balfouri (Socotra Island blue baboon tarantula) protein is Mu/omega-theraphotoxin-Mb1a.